A 914-amino-acid polypeptide reads, in one-letter code: Thyroid peroxidase (914 aa).

A signal peptide spans 1–31; that stretch reads MRTLGAMAVMLVVMGTAIFLPFLLRSRDILG. At 32–834 the chain is on the extracellular side; that stretch reads GKTMTSHVIS…TCIDSGRLPR (803 aa). Asn123 is a glycosylation site (N-linked (GlcNAc...) asparagine). Cysteines 136 and 152 form a disulfide. Residue Asp232 participates in heme b binding. His233 serves as the catalytic Proton acceptor. Asp234 serves as a coordination point for Ca(2+). Disulfide bonds link Cys253-Cys263 and Cys257-Cys278. N-linked (GlcNAc...) asparagine glycosylation is found at Asn271 and Asn299. The Ca(2+) site is built by Thr313, Phe315, Asp317, and Ser319. N-linked (GlcNAc...) asparagine glycosylation occurs at Asn334. The heme b site is built by Glu387 and His482. 7 disulfide bridges follow: Cys586-Cys643, Cys684-Cys709, Cys730-Cys770, Cys756-Cys782, Cys788-Cys802, Cys796-Cys811, and Cys813-Cys826. An N-linked (GlcNAc...) asparagine glycan is attached at Asn603. Residues 728 to 783 enclose the Sushi domain; it reads DKCVFPEKVDNGNFVHCEESGKLVLVYSCFHGYKLQGQEQVTCTQNGWDSEPPVCK. Positions 784–827 constitute an EGF-like; calcium-binding domain; it reads DVNECADLTHPPCHSSAKCKNTKGSFQCVCTDPYMLGEDEKTCI. The chain crosses the membrane as a helical span at residues 835-859; it reads ASWVSIALGALLIGGLASLSWTVIC. Topologically, residues 860-914 are cytoplasmic; that stretch reads RWTHADKKSTLLITERVTMESGFRKSQESGISPQKAEVQDAEQEPAYGSRVLLCE. Residues 882-907 form a disordered region; that stretch reads FRKSQESGISPQKAEVQDAEQEPAYG.

It belongs to the peroxidase family. XPO subfamily. As to quaternary structure, interacts with DUOX1, DUOX2 and CYBA. Ca(2+) serves as cofactor. Heme b is required as a cofactor. In terms of processing, heme is covalently bound through a H(2)O(2)-dependent autocatalytic process. Heme insertion is important for the delivery of protein at the cell surface. Cleaved in its N-terminal part.

It localises to the membrane. The catalysed reaction is 2 iodide + H2O2 + 2 H(+) = diiodine + 2 H2O. It catalyses the reaction [thyroglobulin]-L-tyrosine + iodide + H2O2 + H(+) = [thyroglobulin]-3-iodo-L-tyrosine + 2 H2O. It carries out the reaction [thyroglobulin]-3-iodo-L-tyrosine + iodide + H2O2 + H(+) = [thyroglobulin]-3,5-diiodo-L-tyrosine + 2 H2O. The enzyme catalyses 2 [thyroglobulin]-3,5-diiodo-L-tyrosine + H2O2 = [thyroglobulin]-L-thyroxine + [thyroglobulin]-dehydroalanine + 2 H2O. The catalysed reaction is [thyroglobulin]-3-iodo-L-tyrosine + [thyroglobulin]-3,5-diiodo-L-tyrosine + H2O2 = [thyroglobulin]-3,3',5-triiodo-L-thyronine + [thyroglobulin]-dehydroalanine + 2 H2O. It functions in the pathway hormone biosynthesis; thyroid hormone biosynthesis. In terms of biological role, iodination and coupling of the hormonogenic tyrosines in thyroglobulin to yield the thyroid hormones T(3) and T(4). This Rattus norvegicus (Rat) protein is Thyroid peroxidase (Tpo).